We begin with the raw amino-acid sequence, 459 residues long: Protein maelstrom (459 aa).

Positions 2–69 (APKKHSGFMM…AQRAKRESSN (68 aa)) form a DNA-binding region, HMG box. A disordered region spans residues 43-78 (NTQQRGPYNSGGKDANVAQRAKRESSNGHGQVDKAQ). The span at 63-78 (AKRESSNGHGQVDKAQ) shows a compositional bias: basic and acidic residues.

It belongs to the maelstrom family. In terms of tissue distribution, in germaria and egg chambers, it is detected in the germline. In the germarium, it is in all regions, including region I where the germ cells are dividing. In early egg chambers, it is uniformly distributed throughout the nurse cells and oocyte but, by stage 5, it is most concentrated around the outer margins of the cells, closest to the periphery of the egg chamber. Level decreases in stages 5 and 6, but most noticeably in the oocyte, where protein level remains. No detectable protein from stage 8 onward (at protein level).

The protein localises to the cytoplasm. It is found in the nucleus. Its subcellular location is the perinuclear region. It localises to the cytoplasmic ribonucleoprotein granule. Involved both in the piRNA and miRNA metabolic processes. As a component of the meiotic nuage, plays a central role during oogenesis by repressing transposable elements and preventing their mobilization, which is essential for the germline integrity. Repression of transposable elements is mediated via the piRNA metabolic process, which mediates the repression of transposable elements during meiosis by forming complexes composed of piRNAs and Piwi proteins and governs the repression of transposons. As a nuclear component, it is required for proper differentiation in the germline stem cell (GSC) lineage by repressing microRNA-7 (miR-7), thereby acting as an indirect regulator of bag-of-marbles (Bam). Acts by binding to the promoter of miR-7 gene and repressing its expression; miR-7 repression alleviates the Bam repression by miR-7, thereby allowing differentiation in the germline stem cell (GSC) lineage. Indirectly required to position the microtubule organizing center in stage 2-6 oocytes. Involved in repression of long interspersed nuclear elements (LINEs) including HeT-A, I-element, TART and possibly mst40 LINEs; may have a role in production of piwi-interacting RNA (piRNA). The protein is Protein maelstrom of Drosophila melanogaster (Fruit fly).